The sequence spans 308 residues: Reticulon-like protein 1 (308 aa).

Composition is skewed to polar residues over residues 1 to 17 (MSEQHSLNPFESGSVTA) and 41 to 66 (PSTELPSATSFPSALPNSENPVIQNI). Disordered regions lie at residues 1 to 22 (MSEQHSLNPFESGSVTASDVAA) and 41 to 92 (PSTE…CPVS). The N-linked (GlcNAc...) asparagine glycan is linked to N65. The span at 67-81 (SSSSSEPHHTSQSTP) shows a compositional bias: low complexity. 2 N-linked (GlcNAc...) asparagine glycosylation sites follow: N113 and N135. The region spanning 127–308 (LWSVLTWKNT…TETINTTVNK (182 aa)) is the Reticulon domain. Helical transmembrane passes span 138 to 158 (CSFSTLMSILALVYVPSWINL), 166 to 186 (FRYVFLITSIIEFGGLFASNG), 233 to 253 (PILTFTASVAAFIEFFLSGFL), and 255 to 275 (YKSLFVWNVLFAFILPRLYVC). N303 carries N-linked (GlcNAc...) asparagine glycosylation.

As to quaternary structure, interacts with TTS1 and YOP1.

It localises to the endoplasmic reticulum membrane. Its subcellular location is the nucleus membrane. Required for the correct positioning of the cellular division plane by delimiting the actomyosin ring assembly at the cell equator. Overexpression causes cell lysis. This chain is Reticulon-like protein 1 (rtn1), found in Schizosaccharomyces pombe (strain 972 / ATCC 24843) (Fission yeast).